The following is a 367-amino-acid chain: Cytochrome b (367 aa).

The next 4 helical transmembrane spans lie at 33-53, 77-98, 113-133, and 178-198; these read FGSL…FLAM, WVLR…YLHI, WNMG…GYVL, and FFAF…VHLL. 2 residues coordinate heme b: histidine 83 and histidine 97. Heme b-binding residues include histidine 182 and histidine 196. Histidine 201 lines the a ubiquinone pocket. 4 helical membrane passes run 226 to 246, 288 to 308, 320 to 340, and 347 to 367; these read IKDI…VLFS, LGGV…PFLH, FSQC…WIGG, and YIII…VIMP.

Belongs to the cytochrome b family. In terms of assembly, the cytochrome bc1 complex contains 11 subunits: 3 respiratory subunits (MT-CYB, CYC1 and UQCRFS1), 2 core proteins (UQCRC1 and UQCRC2) and 6 low-molecular weight proteins (UQCRH/QCR6, UQCRB/QCR7, UQCRQ/QCR8, UQCR10/QCR9, UQCR11/QCR10 and a cleavage product of UQCRFS1). This cytochrome bc1 complex then forms a dimer. The cofactor is heme b.

The protein resides in the mitochondrion inner membrane. Component of the ubiquinol-cytochrome c reductase complex (complex III or cytochrome b-c1 complex) that is part of the mitochondrial respiratory chain. The b-c1 complex mediates electron transfer from ubiquinol to cytochrome c. Contributes to the generation of a proton gradient across the mitochondrial membrane that is then used for ATP synthesis. This is Cytochrome b (MT-CYB) from Hypsugo savii (Savi's pipistrelle).